The sequence spans 111 residues: Fluoride-specific ion channel FluC (111 aa).

3 helical membrane passes run 2-22 (GLLL…RFAL), 36-56 (GILL…AFLI), and 71-91 (FLLV…SLDI). Residues Gly79 and Thr82 each contribute to the Na(+) site.

It belongs to the fluoride channel Fluc/FEX (TC 1.A.43) family.

It is found in the cell inner membrane. The catalysed reaction is fluoride(in) = fluoride(out). With respect to regulation, na(+) is not transported, but it plays an essential structural role and its presence is essential for fluoride channel function. In terms of biological role, fluoride-specific ion channel. Important for reducing fluoride concentration in the cell, thus reducing its toxicity. This Francisella tularensis subsp. holarctica (strain FTNF002-00 / FTA) protein is Fluoride-specific ion channel FluC.